A 109-amino-acid polypeptide reads, in one-letter code: uncharacterized protein (109 aa).

Positions 1–22 (MKRHSTLFLFTLLTLTTVPAQA) are cleaved as a signal peptide. The interval 36-109 (INDASNPDRG…ERRMEDEYGQ (74 aa)) is disordered. Basic and acidic residues predominate over residues 41 to 109 (NPDRGRDYED…ERRMEDEYGQ (69 aa)).

This is an uncharacterized protein from Escherichia coli O157:H7.